The sequence spans 210 residues: Ribonuclease HII (210 aa).

One can recognise an RNase H type-2 domain in the interval 17–206 (DIICGVDEAG…VRALLGGVTP (190 aa)). Positions 23, 24, and 115 each coordinate a divalent metal cation.

It belongs to the RNase HII family. It depends on Mn(2+) as a cofactor. Mg(2+) serves as cofactor.

The protein localises to the cytoplasm. The catalysed reaction is Endonucleolytic cleavage to 5'-phosphomonoester.. In terms of biological role, endonuclease that specifically degrades the RNA of RNA-DNA hybrids. The protein is Ribonuclease HII of Janthinobacterium sp. (strain Marseille) (Minibacterium massiliensis).